The following is a 384-amino-acid chain: Odorant receptor 46a, isoform B (384 aa).

Over 1–37 the chain is Cytoplasmic; sequence MVTEDFYKYQVWYFQILGVWQLPTWAADHQRRFQSMR. The helical transmembrane segment at 38 to 58 threads the bilayer; it reads FGFILVILFIMLLLFSFEMLN. Asn59 carries N-linked (GlcNAc...) asparagine glycosylation. Topologically, residues 59–65 are extracellular; sequence NISQVRE. A helical transmembrane segment spans residues 66–86; the sequence is ILKVFFMFATEISCMAKLLHL. At 87-130 the chain is on the cytoplasmic side; it reads KLKSRKLAGLVDAMLSPEFGVKSEQEMQMLELDRVAVVRMRNSY. A helical membrane pass occupies residues 131 to 151; sequence GIMSLGAASLILIVPCFDNFG. Residues 152-165 lie on the Extracellular side of the membrane; that stretch reads ELPLAMLEVCSIEG. The chain crosses the membrane as a helical span at residues 166–186; it reads WICYWSQYLFHSICLLPTCVL. Over 187-247 the chain is Cytoplasmic; the sequence is NITYDSVAYS…YNRIVRFKDL (61 aa). Residues 248-268 form a helical membrane-spanning segment; the sequence is VELFIKGPGSVQLMCSVLVLV. Residues 269-283 lie on the Extracellular side of the membrane; the sequence is SNLYDMSTMSIANGD. Residues 284-304 form a helical membrane-spanning segment; that stretch reads AIFMLKTCIYQLVMLWQIFII. The Cytoplasmic portion of the chain corresponds to 305–348; the sequence is CYASNEVTVQSSRLCHSIYSSQWTGWNRANRRIVLLMMQRFNSP. A helical membrane pass occupies residues 349 to 369; the sequence is MLLSTFNPTFAFSLEAFGSIV. N-linked (GlcNAc...) asparagine glycosylation is present at Asn370. Topologically, residues 370 to 384 are extracellular; it reads NCSYSYFALLKRVNS.

This sequence belongs to the insect chemoreceptor superfamily. Heteromeric odorant receptor channel (TC 1.A.69) family. Or2a subfamily. Interacts with Orco. Complexes exist early in the endomembrane system in olfactory sensory neurons (OSNs), coupling these complexes to the conserved ciliary trafficking pathway. Isoform B is expressed in the antenna.

It localises to the cell membrane. Odorant receptor which mediates acceptance or avoidance behavior, depending on its substrates. The odorant receptor repertoire encodes a large collection of odor stimuli that vary widely in identity, intensity, and duration. May form a complex with Orco to form odorant-sensing units, providing sensitive and prolonged odorant signaling and calcium permeability. In Drosophila melanogaster (Fruit fly), this protein is Odorant receptor 46a, isoform B (Or46a).